A 234-amino-acid chain; its full sequence is Peptidase E (234 aa).

Active-site charge relay system residues include Ser-123, Asp-138, and His-160.

Belongs to the peptidase S51 family.

The protein localises to the cytoplasm. The catalysed reaction is Dipeptidase E catalyzes the hydrolysis of dipeptides Asp-|-Xaa. It does not act on peptides with N-terminal Glu, Asn or Gln, nor does it cleave isoaspartyl peptides.. Hydrolyzes dipeptides containing N-terminal aspartate residues. May play a role in allowing the cell to use peptide aspartate to spare carbon otherwise required for the synthesis of the aspartate family of amino acids. The protein is Peptidase E of Haemophilus influenzae (strain PittGG).